Reading from the N-terminus, the 240-residue chain is Large ribosomal subunit protein uL2 (240 aa).

Over residues M1 to G11 the composition is skewed to polar residues. Disordered regions lie at residues M1–V28 and G206–K240. Basic residues-rich tracts occupy residues G13–V28 and S224–K240.

The protein belongs to the universal ribosomal protein uL2 family. Part of the 50S ribosomal subunit. Forms a bridge to the 30S subunit in the 70S ribosome.

Its function is as follows. One of the primary rRNA binding proteins. Required for association of the 30S and 50S subunits to form the 70S ribosome, for tRNA binding and peptide bond formation. It has been suggested to have peptidyltransferase activity; this is somewhat controversial. Makes several contacts with the 16S rRNA in the 70S ribosome. The protein is Large ribosomal subunit protein uL2 of Methanococcus maripaludis (strain C5 / ATCC BAA-1333).